Reading from the N-terminus, the 364-residue chain is UDP-N-acetylglucosamine--N-acetylmuramyl-(pentapeptide) pyrophosphoryl-undecaprenol N-acetylglucosamine transferase 1 (364 aa).

UDP-N-acetyl-alpha-D-glucosamine contacts are provided by residues Thr10–Gly12, Asn124, Ser195, Ile250, and Gln295.

Belongs to the glycosyltransferase 28 family. MurG subfamily.

The protein localises to the cell membrane. The catalysed reaction is di-trans,octa-cis-undecaprenyl diphospho-N-acetyl-alpha-D-muramoyl-L-alanyl-D-glutamyl-meso-2,6-diaminopimeloyl-D-alanyl-D-alanine + UDP-N-acetyl-alpha-D-glucosamine = di-trans,octa-cis-undecaprenyl diphospho-[N-acetyl-alpha-D-glucosaminyl-(1-&gt;4)]-N-acetyl-alpha-D-muramoyl-L-alanyl-D-glutamyl-meso-2,6-diaminopimeloyl-D-alanyl-D-alanine + UDP + H(+). Its pathway is cell wall biogenesis; peptidoglycan biosynthesis. Functionally, cell wall formation. Catalyzes the transfer of a GlcNAc subunit on undecaprenyl-pyrophosphoryl-MurNAc-pentapeptide (lipid intermediate I) to form undecaprenyl-pyrophosphoryl-MurNAc-(pentapeptide)GlcNAc (lipid intermediate II). This chain is UDP-N-acetylglucosamine--N-acetylmuramyl-(pentapeptide) pyrophosphoryl-undecaprenol N-acetylglucosamine transferase 1, found in Bacillus cereus (strain ATCC 10987 / NRS 248).